Reading from the N-terminus, the 444-residue chain is Xylose isomerase (444 aa).

Catalysis depends on residues His101 and Asp104. 7 residues coordinate Mg(2+): Glu232, Glu268, His271, Asp296, Asp307, Asp309, and Asp339.

It belongs to the xylose isomerase family. As to quaternary structure, homotetramer. It depends on Mg(2+) as a cofactor.

The protein resides in the cytoplasm. It catalyses the reaction alpha-D-xylose = alpha-D-xylulofuranose. This is Xylose isomerase from Thermotoga sp. (strain RQ2).